The chain runs to 497 residues: MQEPLLRTEGLDYDTFPEVPATPGERERAGALKNRRVFLATFAAVLGNFSFGYALVYTSPVIPELKLSSDPALHLDKIQASWFGSVFTLGAAAGGLSAMLLNDLLGRKLSIMFSAVPSAIGYAIMAGARGLWMLLLGRMLTGFAGGLTAACIPVYVSEIAPPDVRGALGATPQLMAVFGSLSLYALGLLLPWRWLAVAGEGPVLIMILLLSFMPNSPRFLLSKSRDEEALQALTWLRADSEVHWEFEQIQDNVRRQSSRVSWAEAREPRVYRPVLIAVLMRFLQQLTGITPILVYLQTIFDNTSVVLPSQQDAAIVGAVRLLSVLIAAVTMDLAGRKVLLYVSASVMFAANLTLGLYVQFVPRPLTPNSTVEIVTLGDTAFNYLTLIPLLATMLFIMGYAMGWGPITWLLMSEVLPLRARGVASGLCVLVSWLTAFVLTNYFLLAVNAFGLQVPFFFFSAICLLSLLFTGCCVPETRGRSLEQIEAFFHTRRMSFRP.

At 1–36 (MQEPLLRTEGLDYDTFPEVPATPGERERAGALKNRR) the chain is on the cytoplasmic side. The short motif at 5–6 (LL) is the Dileucine internalization motif element. The chain crosses the membrane as a helical span at residues 37–57 (VFLATFAAVLGNFSFGYALVY). At 58-80 (TSPVIPELKLSSDPALHLDKIQA) the chain is on the extracellular side. The chain crosses the membrane as a helical span at residues 81–101 (SWFGSVFTLGAAAGGLSAMLL). Residues 102–115 (NDLLGRKLSIMFSA) are Cytoplasmic-facing. Residues 116–136 (VPSAIGYAIMAGARGLWMLLL) traverse the membrane as a helical segment. At 137 to 138 (GR) the chain is on the extracellular side. A helical transmembrane segment spans residues 139–159 (MLTGFAGGLTAACIPVYVSEI). At 160–171 (APPDVRGALGAT) the chain is on the cytoplasmic side. A helical transmembrane segment spans residues 172–192 (PQLMAVFGSLSLYALGLLLPW). Gln-173 contributes to the a D-hexose binding site. Arg-193 is a topological domain (extracellular). A helical membrane pass occupies residues 194–214 (WLAVAGEGPVLIMILLLSFMP). Over 215 to 273 (NSPRFLLSKSRDEEALQALTWLRADSEVHWEFEQIQDNVRRQSSRVSWAEAREPRVYRP) the chain is Cytoplasmic. A helical membrane pass occupies residues 274-294 (VLIAVLMRFLQQLTGITPILV). Residue 284 to 285 (QQ) coordinates a D-hexose. The Extracellular segment spans residues 295–312 (YLQTIFDNTSVVLPSQQD). Asn-302 is a glycosylation site (N-linked (GlcNAc...) asparagine). A helical transmembrane segment spans residues 313 to 333 (AAIVGAVRLLSVLIAAVTMDL). Over 334–337 (AGRK) the chain is Cytoplasmic. The helical transmembrane segment at 338-358 (VLLYVSASVMFAANLTLGLYV) threads the bilayer. The Extracellular portion of the chain corresponds to 359 to 385 (QFVPRPLTPNSTVEIVTLGDTAFNYLT). An N-linked (GlcNAc...) asparagine glycan is attached at Asn-368. The helical transmembrane segment at 386-406 (LIPLLATMLFIMGYAMGWGPI) threads the bilayer. The Cytoplasmic portion of the chain corresponds to 407-425 (TWLLMSEVLPLRARGVASG). Trp-408 lines the a D-hexose pocket. Residues 426-446 (LCVLVSWLTAFVLTNYFLLAV) form a helical membrane-spanning segment. Position 447 (Asn-447) is a topological domain, extracellular. Residues 448–468 (AFGLQVPFFFFSAICLLSLLF) traverse the membrane as a helical segment. Residues 469 to 497 (TGCCVPETRGRSLEQIEAFFHTRRMSFRP) lie on the Cytoplasmic side of the membrane.

Belongs to the major facilitator superfamily. Sugar transporter (TC 2.A.1.1) family. Mainly expressed in brain and spleen. Also expressed in lung, heart, muscle, liver, kidney, fat, whole blood, testes, ovaries and uterus.

Its subcellular location is the lysosome membrane. Its function is as follows. Probable sugar transporter that acts as a regulator of glycolysis in macrophages. Does not transport glucose. The sequence is that of Solute carrier family 2, facilitated glucose transporter member 6 from Mus musculus (Mouse).